Consider the following 101-residue polypeptide: Large ribosomal subunit protein uL23 (101 aa).

The protein belongs to the universal ribosomal protein uL23 family. In terms of assembly, part of the 50S ribosomal subunit. Contacts protein L29, and trigger factor when it is bound to the ribosome.

In terms of biological role, one of the early assembly proteins it binds 23S rRNA. One of the proteins that surrounds the polypeptide exit tunnel on the outside of the ribosome. Forms the main docking site for trigger factor binding to the ribosome. This Corynebacterium jeikeium (strain K411) protein is Large ribosomal subunit protein uL23.